We begin with the raw amino-acid sequence, 1556 residues long: uncharacterized protein (1556 aa).

At serine 2 the chain carries N-acetylserine. Positions 145 to 156 (NQLENRKSLERK) are enriched in basic and acidic residues. Residues 145 to 170 (NQLENRKSLERKPSRKRRKKNSNVND) are disordered. The 206-residue stretch at 378–583 (SGDYPVCAKG…MIMSYLKLHP (206 aa)) folds into the Helicase ATP-binding domain. 391–398 (EEMGLGKT) lines the ATP pocket. Serine 810 is subject to Phosphoserine. Residues 810-850 (SEDEDEHMDERFGEKETSSGDESDREINGAKNHDNHNNDGM) form a disordered region. Basic and acidic residues-rich tracts occupy residues 817–827 (MDERFGEKETS) and 834–846 (REINGAKNHDNHN). Residues 1239 to 1277 (CSICLGEVEIGAIIKCGHYFCKSCILTWLRAHSKCPICK) form an RING-type zinc finger. Over residues 1297-1309 (REKEIQEPRREGA) the composition is skewed to basic and acidic residues. Disordered regions lie at residues 1297–1319 (REKEIQEPRREGADSSQDNSNEN) and 1508–1534 (EKSKKGDKYDEAQDETDNEESDDAKFE). Positions 1310 to 1319 (DSSQDNSNEN) are enriched in low complexity. A Helicase C-terminal domain is found at 1363–1531 (KLISYLRLKS…ETDNEESDDA (169 aa)). Over residues 1508 to 1518 (EKSKKGDKYDE) the composition is skewed to basic and acidic residues. Residues 1519-1529 (AQDETDNEESD) are compositionally biased toward acidic residues.

The protein belongs to the SNF2/RAD54 helicase family.

The protein localises to the nucleus. In terms of biological role, is probably involved in a pathway contributing to genomic integrity. This is an uncharacterized protein from Saccharomyces cerevisiae (strain ATCC 204508 / S288c) (Baker's yeast).